Reading from the N-terminus, the 407-residue chain is 3-oxoacyl-[acyl-carrier-protein] synthase 1 (407 aa).

The 406-residue stretch at 1-406 folds into the Ketosynthase family 3 (KS3) domain; sequence MKRVVITGFG…GTNVSLILKK (406 aa). Residues cysteine 164, histidine 300, and histidine 336 each act as for beta-ketoacyl synthase activity in the active site.

The protein belongs to the thiolase-like superfamily. Beta-ketoacyl-ACP synthases family. In terms of assembly, homodimer.

It is found in the cytoplasm. It catalyses the reaction a fatty acyl-[ACP] + malonyl-[ACP] + H(+) = a 3-oxoacyl-[ACP] + holo-[ACP] + CO2. It carries out the reaction (3Z)-decenoyl-[ACP] + malonyl-[ACP] + H(+) = 3-oxo-(5Z)-dodecenoyl-[ACP] + holo-[ACP] + CO2. The protein operates within lipid metabolism; fatty acid biosynthesis. Functionally, involved in the type II fatty acid elongation cycle. Catalyzes the elongation of a wide range of acyl-ACP by the addition of two carbons from malonyl-ACP to an acyl acceptor. Can also use unsaturated fatty acids. Catalyzes a key reaction in unsaturated fatty acid (UFA) synthesis, the elongation of the cis-3-decenoyl-ACP produced by FabA. The protein is 3-oxoacyl-[acyl-carrier-protein] synthase 1 (fabB) of Buchnera aphidicola subsp. Schizaphis graminum (strain Sg).